Consider the following 177-residue polypeptide: GTP-dependent dephospho-CoA kinase (177 aa).

GTP contacts are provided by Asp48, Val49, Val50, Asp67, Lys69, and Glu124.

The protein belongs to the GTP-dependent DPCK family.

It catalyses the reaction 3'-dephospho-CoA + GTP = GDP + CoA + H(+). It functions in the pathway cofactor biosynthesis; coenzyme A biosynthesis. In terms of biological role, catalyzes the GTP-dependent phosphorylation of the 3'-hydroxyl group of dephosphocoenzyme A to form coenzyme A (CoA). The polypeptide is GTP-dependent dephospho-CoA kinase (Pyrococcus furiosus (strain ATCC 43587 / DSM 3638 / JCM 8422 / Vc1)).